A 673-amino-acid polypeptide reads, in one-letter code: UvrABC system protein B (673 aa).

The 158-residue stretch at 26-183 (EGLEDGLAHQ…RRLAELQYTR (158 aa)) folds into the Helicase ATP-binding domain. 39-46 (GVTGSGKT) is an ATP binding site. Positions 92-115 (YYDYYQPEAYVPSSDTFIEKDASV) match the Beta-hairpin motif. A Helicase C-terminal domain is found at 431–597 (QVDDLLSEIR…GLNKKVVDIL (167 aa)). The UVR domain occupies 633–668 (QQKIHELEGQMMQHAQNLEFEEAAQIRDQLHQLREL).

It belongs to the UvrB family. In terms of assembly, forms a heterotetramer with UvrA during the search for lesions. Interacts with UvrC in an incision complex.

The protein resides in the cytoplasm. Its function is as follows. The UvrABC repair system catalyzes the recognition and processing of DNA lesions. A damage recognition complex composed of 2 UvrA and 2 UvrB subunits scans DNA for abnormalities. Upon binding of the UvrA(2)B(2) complex to a putative damaged site, the DNA wraps around one UvrB monomer. DNA wrap is dependent on ATP binding by UvrB and probably causes local melting of the DNA helix, facilitating insertion of UvrB beta-hairpin between the DNA strands. Then UvrB probes one DNA strand for the presence of a lesion. If a lesion is found the UvrA subunits dissociate and the UvrB-DNA preincision complex is formed. This complex is subsequently bound by UvrC and the second UvrB is released. If no lesion is found, the DNA wraps around the other UvrB subunit that will check the other stand for damage. This chain is UvrABC system protein B, found in Salmonella agona (strain SL483).